A 350-amino-acid chain; its full sequence is Succinylglutamate desuccinylase (350 aa).

Residues H71, E74, and H169 each coordinate Zn(2+). Residue E233 is part of the active site.

It belongs to the AspA/AstE family. Succinylglutamate desuccinylase subfamily. It depends on Zn(2+) as a cofactor.

It carries out the reaction N-succinyl-L-glutamate + H2O = L-glutamate + succinate. It participates in amino-acid degradation; L-arginine degradation via AST pathway; L-glutamate and succinate from L-arginine: step 5/5. In terms of biological role, transforms N(2)-succinylglutamate into succinate and glutamate. The polypeptide is Succinylglutamate desuccinylase (Pseudoalteromonas atlantica (strain T6c / ATCC BAA-1087)).